We begin with the raw amino-acid sequence, 560 residues long: Mannosyl-oligosaccharide 1,2-alpha-mannosidase MNS1 (560 aa).

Residues 1–27 (MARSRSISGYGIWKYLNPAYYLRRPRR) lie on the Cytoplasmic side of the membrane. The helical; Signal-anchor for type II membrane protein transmembrane segment at 28 to 47 (LALLFIVFVSVSMLVWDRIN) threads the bilayer. A coiled-coil region spans residues 47–80 (NLAREHEVEVFKLNEEVSRLEQMLEELNGGVGNK). Residues 48 to 560 (LAREHEVEVF…QRKFGHQINV (513 aa)) are Lumenal-facing. Glu179 serves as the catalytic Proton donor. Asp312 is a catalytic residue. Asn326 is a glycosylation site (N-linked (GlcNAc...) asparagine). An intrachain disulfide couples Cys377 to Cys409. Glu423 (proton donor) is an active-site residue. Residue Glu445 is part of the active site. N-linked (GlcNAc...) asparagine glycosylation occurs at Asn459. Thr529 contacts Ca(2+).

This sequence belongs to the glycosyl hydrolase 47 family. It depends on Ca(2+) as a cofactor. Mn(2+) is required as a cofactor. Requires Mg(2+) as cofactor. Expressed in flowers, siliques, stems, leaves, roots, pollen grains, shoot apical meristems, hypocotyls and upper region of the root.

Its subcellular location is the golgi apparatus membrane. It catalyses the reaction N(4)-(alpha-D-Man-(1-&gt;2)-alpha-D-Man-(1-&gt;2)-alpha-D-Man-(1-&gt;3)-[alpha-D-Man-(1-&gt;2)-alpha-D-Man-(1-&gt;3)-[alpha-D-Man-(1-&gt;2)-alpha-D-Man-(1-&gt;6)]-alpha-D-Man-(1-&gt;6)]-beta-D-Man-(1-&gt;4)-beta-D-GlcNAc-(1-&gt;4)-beta-D-GlcNAc)-L-asparaginyl-[protein] (N-glucan mannose isomer 9A1,2,3B1,2,3) + 4 H2O = N(4)-(alpha-D-Man-(1-&gt;3)-[alpha-D-Man-(1-&gt;3)-[alpha-D-Man-(1-&gt;6)]-alpha-D-Man-(1-&gt;6)]-beta-D-Man-(1-&gt;4)-beta-D-GlcNAc-(1-&gt;4)-beta-D-GlcNAc)-L-asparaginyl-[protein] (N-glucan mannose isomer 5A1,2) + 4 beta-D-mannose. It carries out the reaction N(4)-(alpha-D-Man-(1-&gt;2)-alpha-D-Man-(1-&gt;2)-alpha-D-Man-(1-&gt;3)-[alpha-D-Man-(1-&gt;3)-[alpha-D-Man-(1-&gt;2)-alpha-D-Man-(1-&gt;6)]-alpha-D-Man-(1-&gt;6)]-beta-D-Man-(1-&gt;4)-beta-D-GlcNAc-(1-&gt;4)-beta-D-GlcNAc)-L-asparaginyl-[protein] (N-glucan mannose isomer 8A1,2,3B1,3) + 3 H2O = N(4)-(alpha-D-Man-(1-&gt;3)-[alpha-D-Man-(1-&gt;3)-[alpha-D-Man-(1-&gt;6)]-alpha-D-Man-(1-&gt;6)]-beta-D-Man-(1-&gt;4)-beta-D-GlcNAc-(1-&gt;4)-beta-D-GlcNAc)-L-asparaginyl-[protein] (N-glucan mannose isomer 5A1,2) + 3 beta-D-mannose. The catalysed reaction is N(4)-(alpha-D-Man-(1-&gt;2)-alpha-D-Man-(1-&gt;2)-alpha-D-Man-(1-&gt;3)-[alpha-D-Man-(1-&gt;2)-alpha-D-Man-(1-&gt;3)-[alpha-D-Man-(1-&gt;2)-alpha-D-Man-(1-&gt;6)]-alpha-D-Man-(1-&gt;6)]-beta-D-Man-(1-&gt;4)-beta-D-GlcNAc-(1-&gt;4)-beta-D-GlcNAc)-L-asparaginyl-[protein] (N-glucan mannose isomer 9A1,2,3B1,2,3) + H2O = N(4)-(alpha-D-Man-(1-&gt;2)-alpha-D-Man-(1-&gt;2)-alpha-D-Man-(1-&gt;3)-[alpha-D-Man-(1-&gt;3)-[alpha-D-Man-(1-&gt;2)-alpha-D-Man-(1-&gt;6)]-alpha-D-Man-(1-&gt;6)]-beta-D-Man-(1-&gt;4)-beta-D-GlcNAc-(1-&gt;4)-beta-D-GlcNAc)-L-asparaginyl-[protein] (N-glucan mannose isomer 8A1,2,3B1,3) + beta-D-mannose. Its pathway is protein modification; protein glycosylation. Inhibited by kifunensine and 1-deoxymannojirimycin, but not by swainsonine. Its function is as follows. Class I alpha-mannosidase essential for early N-glycan processing. Progressively trims alpha-1,2-linked mannose residues. Produces Man(5)GlcNAc(2) from Man(8)GlcNAc(2), but only Man(6)GlcNAc(2) from Man(9)GlcNAc(2). Has difficulty acting on the terminal mannose of the b-branch. Involved in root development and cell wall biosynthesis. In Arabidopsis thaliana (Mouse-ear cress), this protein is Mannosyl-oligosaccharide 1,2-alpha-mannosidase MNS1 (MNS1).